Here is a 372-residue protein sequence, read N- to C-terminus: Fatty acid conjugase FAC2 B (372 aa).

2 helical membrane passes run 44 to 64 (YFLFHDIIVTCILFYVASNYI) and 74 to 94 (IVWPVYWISQGVFLGRLWMIG). The Histidine box-1 signature appears at 95–99 (HECGH). Positions 131-135 (HRNHH) match the Histidine box-2 motif. 3 helical membrane passes run 166 to 186 (IGLMITMLCKLTFGYAAYIMF), 217 to 237 (VLFSDIGICIVLYACYRIVTV), and 240 to 260 (AMPAFYVYGIPWVIMSAILFA). Positions 304 to 308 (HVIHH) match the Histidine box-3 motif.

This sequence belongs to the fatty acid desaturase type 1 family. Expressed exclusively in the developing seeds. Not detected in leaves.

It is found in the microsome membrane. It carries out the reaction a (9Z,12Z)-octadecadienoyl-containing glycerolipid + AH2 + O2 = a (8E,10E,12Z)-octadecatrienoyl-containing glycerolipid + A + 2 H2O. It functions in the pathway lipid metabolism; polyunsaturated fatty acid biosynthesis. In terms of biological role, fatty acid conjugase converting 18:2(9Z, 12Z) to calendic acid 18:3(8E, 10E, 12Z). Converts alpha-linolenic acid (18:3(9Z, 12Z, 15Z)) into 18:4(8E, 10E, 12Z, 15Z). Also has weak activity on the mono-unsaturates 16:1(9Z) and 18:1(9Z) producing two conjugated double bonds at delta(8) and delta(10) position. The sequence is that of Fatty acid conjugase FAC2 B from Calendula officinalis (Pot marigold).